Here is a 328-residue protein sequence, read N- to C-terminus: DNA polymerase IV (328 aa).

A UmuC domain is found at 6 to 187 (IIHIDMDYFF…LDIGDFPGVG (182 aa)). The Mg(2+) site is built by Asp-10 and Asp-105. Glu-106 is a catalytic residue.

Belongs to the DNA polymerase type-Y family. In terms of assembly, monomer. Mg(2+) serves as cofactor.

The protein localises to the cytoplasm. It catalyses the reaction DNA(n) + a 2'-deoxyribonucleoside 5'-triphosphate = DNA(n+1) + diphosphate. Poorly processive, error-prone DNA polymerase involved in untargeted mutagenesis. Copies undamaged DNA at stalled replication forks, which arise in vivo from mismatched or misaligned primer ends. These misaligned primers can be extended by PolIV. Exhibits no 3'-5' exonuclease (proofreading) activity. May be involved in translesional synthesis, in conjunction with the beta clamp from PolIII. This chain is DNA polymerase IV, found in Staphylococcus aureus (strain bovine RF122 / ET3-1).